A 356-amino-acid chain; its full sequence is Torsin-like protein (356 aa).

Residues 1–18 (MKLDYVLLLLFHLCFVNT) form the signal peptide. 110–117 (GYTGSGKN) provides a ligand contact to ATP. Residues asparagine 125 and asparagine 250 are each glycosylated (N-linked (GlcNAc...) asparagine).

It belongs to the ClpA/ClpB family. Torsin subfamily.

The protein localises to the endoplasmic reticulum lumen. May serve as a molecular chaperone assisting in the proper folding of secreted and/or membrane proteins. This chain is Torsin-like protein (ooc-5), found in Caenorhabditis elegans.